The following is a 466-amino-acid chain: Ribosome biogenesis protein YTM1 (466 aa).

The segment at 11-99 (IKIKFFTNEE…EAFLTLEYTR (89 aa)) is ubiquitin-like (UBL) domain. A sufficient for interaction with ERB1 and association with 66S pre-ribosomes region spans residues 109 to 466 (SFNNDDWISS…QINKGSDIAK (358 aa)). WD repeat units lie at residues 124 to 163 (PTTK…EKQY), 165 to 203 (GHSA…IIDE), 219 to 258 (GHKA…MTSI), 296 to 336 (GHSE…CVDT), 338 to 377 (TTGY…TSDQ), 384 to 424 (GHTN…SLYT), and 431 to 466 (STNA…DIAK).

This sequence belongs to the WD repeat WDR12/YTM1 family. In terms of assembly, component of the NOP7 complex, composed of ERB1, NOP7 and YTM1. The complex is held together by ERB1, which interacts with NOP7 via its N-terminal domain and with YTM1 via a high-affinity interaction between the seven-bladed beta-propeller domains of the 2 proteins. The NOP7 complex associates with the 66S pre-ribosome. Interacts (via UBL domain) with MDN1 (via VWFA/MIDAS domain).

The protein resides in the nucleus. It localises to the nucleolus. It is found in the nucleoplasm. In terms of biological role, component of the NOP7 complex, which is required for maturation of the 25S and 5.8S ribosomal RNAs and formation of the 60S ribosome. This chain is Ribosome biogenesis protein YTM1, found in Candida albicans (strain SC5314 / ATCC MYA-2876) (Yeast).